The following is a 142-amino-acid chain: Sec-independent protein translocase protein TatB (142 aa).

A helical membrane pass occupies residues 2 to 22 (FANVGWGEMLVLVIAGLVILG). Residues 89 to 142 (DDSIFTGKFDQNGKSEKPEQKPEKPQSAPGPAAAVPDQPAGGRSGSTPYDTDAT) are disordered. Residues 99 to 112 (QNGKSEKPEQKPEK) show a composition bias toward basic and acidic residues. The span at 133–142 (GSTPYDTDAT) shows a compositional bias: polar residues.

The protein belongs to the TatB family. In terms of assembly, the Tat system comprises two distinct complexes: a TatABC complex, containing multiple copies of TatA, TatB and TatC subunits, and a separate TatA complex, containing only TatA subunits. Substrates initially bind to the TatABC complex, which probably triggers association of the separate TatA complex to form the active translocon.

Its subcellular location is the cell membrane. In terms of biological role, part of the twin-arginine translocation (Tat) system that transports large folded proteins containing a characteristic twin-arginine motif in their signal peptide across membranes. Together with TatC, TatB is part of a receptor directly interacting with Tat signal peptides. TatB may form an oligomeric binding site that transiently accommodates folded Tat precursor proteins before their translocation. In Mycolicibacterium vanbaalenii (strain DSM 7251 / JCM 13017 / BCRC 16820 / KCTC 9966 / NRRL B-24157 / PYR-1) (Mycobacterium vanbaalenii), this protein is Sec-independent protein translocase protein TatB.